The primary structure comprises 796 residues: MFAVNLKICIFLSLVSFLLQCKNTLANVTFEQKVQTNLSHDKNGDIVYGHREFKGGIYAFLGYDNCTIEVNKTVNGIDWNEKKDVKVSGNNNIAVVYSIFTSEEKMILIFKCDNKFYITKYGKEFKWSDPKVIDVSNVIGTNTTPAVYSGSLLSMNNDFEKYILVCENHSQNYINVVDQEYMREIRLLGKCMLSFDEGNNWKNEVMNLYSDEGYTKINTLRLSDYGGKILVKGTNAQNLNQTIRSIILLCSNLHDWKLFCGLPTIRFRKDISVENLTYLNTYHLAIVKNEDKLQLAFTYDLFETFDPQYLNTEFNGVSHYFVLAPDEMVYLFYHGNEKKNYVIKIKTVPRKIGCELNTNDTVNKIYTYTYKYIYNNKLSAKTCKVPSSHLKYSSDGLYKLFEVRLPKDIKVTENCFRYSFLSDLNNKYHTTIIKTRVINKLEDYVEVQFHFPIYYTKFLYNYKSTYCVLSNNYRIVVEFDYIRNHIDLDFPFDTDTVKLYSNESVTHAFRNNTEKTHVHKFPKGTYMTSYFSYEKEYVISNYIEEPFSTTFTILTQTQMNVHFMAGGQKYKYEGIDLTDSSPNYELSLNSLSDSQNVDIFVSKFDNNKTIGFVCPVKSSYDGLNCFDNVYIKNKTLVKIEYLFGENDIFVVPQRRIYKTEGTAMESLLYLNNNNVKKLIDDKSIIHFYCECNVNNNVIKVNYYISPFYDENSIKQEINKKDQEITMINKTIPQDEKDILFNNEKVVPLSNEPQEIIQPPIQEKLNTTDPSKAYIYGANIIFIAIISIISLSISSFI.

The N-terminal stretch at 1–26 (MFAVNLKICIFLSLVSFLLQCKNTLA) is a signal peptide. 14 N-linked (GlcNAc...) asparagine glycosylation sites follow: Asn-27, Asn-37, Asn-65, Asn-71, Asn-168, Asn-240, Asn-275, Asn-359, Asn-502, Asn-511, Asn-607, Asn-633, Asn-728, and Asn-765. Residues 571-720 (KYEGIDLTDS…NSIKQEINKK (150 aa)) form the 6-Cys domain. Disulfide bonds link Cys-614–Cys-691 and Cys-625–Cys-689.

As to quaternary structure, interacts with host complement factor CFH isoform 1 (via sushi 4-6 domains) and CFH isoform FHL-1 (via sushi 4-6 domains); this interaction recruits CFH onto the merozoite surface preventing complement-mediated cell lysis. The interaction does not affect CFH activity.

It localises to the cell surface. The protein localises to the cell membrane. During the asexual blood stage, recruits host complement factor H CFH to the surface of merozoites resulting in the down-regulation of the host complement alternative pathway and thus, protecting merozoites from complement-mediated lysis. The sequence is that of Merozoite surface protein P92 from Plasmodium falciparum (isolate 3D7).